The chain runs to 232 residues: Dysfunctional anti-sigma-K factor RskA (232 aa).

Residues 1–90 (MTEHTDFELL…EVRRQSRWRT (90 aa)) lie on the Cytoplasmic side of the membrane. Residues 91-111 (AAFASAAAIAVGLGAFDLGVL) form a helical membrane-spanning segment. The Extracellular segment spans residues 112 to 232 (TRPSPPPTVA…GTILAELPLG (121 aa)).

This sequence belongs to the anti-sigma-K factor family.

It is found in the cell membrane. In terms of biological role, an anti-sigma factor for extracytoplasmic function (ECF) sigma factor SigK. ECF sigma factors are held in an inactive form by an anti-sigma factor until released by regulated intramembrane proteolysis (RIP). However, in M.bovis this protein is probably dysfunctional, due to at least 1 of the 2 naturally occurring polymorphisms in its gene, when compared to M.tuberculosis. This leads to an increased expression of SigK-regulated genes, such as mpb70 and mpb83. RIP occurs when an extracytoplasmic signal triggers a concerted proteolytic cascade to transmit information and elicit cellular responses. The membrane-spanning regulatory substrate protein is first cut extracytoplasmically (site-1 protease, S1P), then within the membrane itself (site-2 protease, S2P, Rip1), while cytoplasmic proteases finish degrading the regulatory protein, liberating the sigma factor. The protein is Dysfunctional anti-sigma-K factor RskA (rskA) of Mycobacterium bovis (strain ATCC BAA-935 / AF2122/97).